Here is an 87-residue protein sequence, read N- to C-terminus: NADH dehydrogenase [ubiquinone] 1 alpha subcomplex subunit 4-like 2 (87 aa).

It belongs to the complex I NDUFA4 subunit family.

The polypeptide is NADH dehydrogenase [ubiquinone] 1 alpha subcomplex subunit 4-like 2 (NDUFA4L2) (Homo sapiens (Human)).